We begin with the raw amino-acid sequence, 317 residues long: Melanocyte-stimulating hormone receptor (317 aa).

Residues 1–37 (MSVQGPQRRLLGSVNSTSPAAPRLGLAANQTGPRCLE) lie on the Extracellular side of the membrane. Asn15 and Asn29 each carry an N-linked (GlcNAc...) asparagine glycan. Residues 38–63 (VSVPDGLFLSLGLVSVVENVLVVAAI) form a helical membrane-spanning segment. At 64–72 (AKNRNLHSP) the chain is on the cytoplasmic side. The helical transmembrane segment at 73–93 (MYYFICCLAVSDLLVSVSSVL) threads the bilayer. Topologically, residues 94–118 (ETAVMLLLEAGTLAGRAAVVQQLDD) are extracellular. The helical transmembrane segment at 119–140 (IIDVLVCGAMVSSLCFLGAIAV) threads the bilayer. Residues 141 to 163 (DRYISIFYALRYHSIVTLPRAWR) are Cytoplasmic-facing. The chain crosses the membrane as a helical span at residues 164 to 183 (AISAIWVASVLSSTLFIAYY). Residues 184–191 (DHTAVLLC) lie on the Extracellular side of the membrane. The chain crosses the membrane as a helical span at residues 192–211 (LVSFFVAMLVLMAVLYVHML). Residues 212–240 (ARACQHARGIARLHKRQRPVHQGLGLKGA) are Cytoplasmic-facing. Residues 241–266 (ATLTILLGIFFLCWGPFFLHLSLMVL) form a helical membrane-spanning segment. The Extracellular segment spans residues 267-279 (CPRHPICGCVFKN). Residues 280–300 (FNLFLTLIICNSIVDPLIYAF) form a helical membrane-spanning segment. Residues 301–317 (RSQELRKTLREVLLCSW) lie on the Cytoplasmic side of the membrane. Cys315 carries the S-palmitoyl cysteine lipid modification.

Belongs to the G-protein coupled receptor 1 family. In terms of assembly, interacts with MGRN1, but does not undergo MGRN1-mediated ubiquitination; this interaction competes with GNAS-binding and thus inhibits agonist-induced cAMP production. Interacts with OPN3; the interaction results in a decrease in MC1R-mediated cAMP signaling and ultimately a decrease in melanin production in melanocytes.

The protein localises to the cell membrane. In terms of biological role, receptor for MSH (alpha, beta and gamma) and ACTH. The activity of this receptor is mediated by G proteins which activate adenylate cyclase. Mediates melanogenesis, the production of eumelanin (black/brown) and phaeomelanin (red/yellow), via regulation of cAMP signaling in melanocytes. This Puma yagouaroundi (Jaguarundi) protein is Melanocyte-stimulating hormone receptor (MC1R).